The sequence spans 122 residues: MKKFNKDIGTYCEKLSCDYLIEHNFKILECNFKNFLGEIDIICIKNSILIIIEVKGRYNYEFGLPKESVSISKQKNIIKVTKSYINYKKLYNFNVRFDVIEIYLNKLNSSYKINHIKDAFRT.

It belongs to the UPF0102 family.

The chain is UPF0102 protein CLL_A1253 from Clostridium botulinum (strain Eklund 17B / Type B).